Here is a 90-residue protein sequence, read N- to C-terminus: YcgL domain-containing protein Spro_2755 (90 aa).

In terms of domain architecture, YcgL spans 1–85; the sequence is MLCVIYRSSK…PLENLLKQHL (85 aa).

In Serratia proteamaculans (strain 568), this protein is YcgL domain-containing protein Spro_2755.